Here is an 88-residue protein sequence, read N- to C-terminus: UPF0250 protein bbp_432 (88 aa).

It belongs to the UPF0250 family.

The polypeptide is UPF0250 protein bbp_432 (Buchnera aphidicola subsp. Baizongia pistaciae (strain Bp)).